The chain runs to 143 residues: Large ribosomal subunit protein uL16 (143 aa).

A compositionally biased stretch (basic residues) spans 1-17 (MLQPKKTKFRRSQKGRM). The segment at 1 to 25 (MLQPKKTKFRRSQKGRMKGNAQRGN) is disordered.

It belongs to the universal ribosomal protein uL16 family. In terms of assembly, part of the 50S ribosomal subunit.

Its function is as follows. Binds 23S rRNA and is also seen to make contacts with the A and possibly P site tRNAs. The polypeptide is Large ribosomal subunit protein uL16 (Azobacteroides pseudotrichonymphae genomovar. CFP2).